The following is a 429-amino-acid chain: 46 kDa membrane protein (429 aa).

A run of 9 helical transmembrane segments spans residues 26–46 (AALTGAAIVVTLPIINSEDVF), 51–71 (TGIDWEVIFLLLSMMIIVSVL), 99–119 (LVLVMALGSALLDNVTTVLLI), 173–193 (FLIHLTPIVIIVTVVLSALLP), 224–244 (LLIKCGVVLLLVFVAFIAHPV), 279–299 (TLLFFAGLFIMVGALVKTDVV), 315–335 (LLTVVLTLGVSTLVSSIIDNI), 360–380 (ILWWALALGADFGGNLTAVGA), and 407–427 (IAVTVISIALAGIYLWLRYLV).

It belongs to the CitM (TC 2.A.11) transporter family.

The protein resides in the cell membrane. The chain is 46 kDa membrane protein (ag45) from Mycobacterium leprae (strain TN).